Consider the following 616-residue polypeptide: Dihydroxy-acid dehydratase (616 aa).

Mg(2+) is bound at residue D81. [2Fe-2S] cluster is bound at residue C122. Mg(2+) contacts are provided by D123 and K124. Position 124 is an N6-carboxylysine (K124). A [2Fe-2S] cluster-binding site is contributed by C195. E491 is a Mg(2+) binding site. The active-site Proton acceptor is S517.

It belongs to the IlvD/Edd family. Homodimer. [2Fe-2S] cluster serves as cofactor. It depends on Mg(2+) as a cofactor.

It carries out the reaction (2R)-2,3-dihydroxy-3-methylbutanoate = 3-methyl-2-oxobutanoate + H2O. The catalysed reaction is (2R,3R)-2,3-dihydroxy-3-methylpentanoate = (S)-3-methyl-2-oxopentanoate + H2O. The protein operates within amino-acid biosynthesis; L-isoleucine biosynthesis; L-isoleucine from 2-oxobutanoate: step 3/4. It participates in amino-acid biosynthesis; L-valine biosynthesis; L-valine from pyruvate: step 3/4. Its function is as follows. Functions in the biosynthesis of branched-chain amino acids. Catalyzes the dehydration of (2R,3R)-2,3-dihydroxy-3-methylpentanoate (2,3-dihydroxy-3-methylvalerate) into 2-oxo-3-methylpentanoate (2-oxo-3-methylvalerate) and of (2R)-2,3-dihydroxy-3-methylbutanoate (2,3-dihydroxyisovalerate) into 2-oxo-3-methylbutanoate (2-oxoisovalerate), the penultimate precursor to L-isoleucine and L-valine, respectively. This is Dihydroxy-acid dehydratase from Shigella flexneri.